A 238-amino-acid chain; its full sequence is tRNA (guanine-N(7)-)-methyltransferase (238 aa).

Residues Glu-68, Glu-93, Asp-120, and Asp-143 each coordinate S-adenosyl-L-methionine. The active site involves Asp-143. Substrate is bound by residues Lys-147, Asp-179, and 216–219; that span reads TKFE.

Belongs to the class I-like SAM-binding methyltransferase superfamily. TrmB family.

The catalysed reaction is guanosine(46) in tRNA + S-adenosyl-L-methionine = N(7)-methylguanosine(46) in tRNA + S-adenosyl-L-homocysteine. It functions in the pathway tRNA modification; N(7)-methylguanine-tRNA biosynthesis. In terms of biological role, catalyzes the formation of N(7)-methylguanine at position 46 (m7G46) in tRNA. The polypeptide is tRNA (guanine-N(7)-)-methyltransferase (Shewanella frigidimarina (strain NCIMB 400)).